Reading from the N-terminus, the 355-residue chain is NADH-quinone oxidoreductase subunit H (355 aa).

The next 8 membrane-spanning stretches (helical) occupy residues 17-37 (IIMV…IAYI), 86-106 (GVFL…WAVI), 119-139 (VGIL…IMAG), 165-185 (IGFV…SAVV), 204-224 (ILNW…VSAL), 262-282 (YVAI…GWLP), 291-311 (WVPG…LFAM), and 332-352 (FLPL…FAGI).

It belongs to the complex I subunit 1 family. In terms of assembly, NDH-1 is composed of 14 different subunits. Subunits NuoA, H, J, K, L, M, N constitute the membrane sector of the complex.

The protein localises to the cell inner membrane. It carries out the reaction a quinone + NADH + 5 H(+)(in) = a quinol + NAD(+) + 4 H(+)(out). NDH-1 shuttles electrons from NADH, via FMN and iron-sulfur (Fe-S) centers, to quinones in the respiratory chain. The immediate electron acceptor for the enzyme in this species is believed to be ubiquinone. Couples the redox reaction to proton translocation (for every two electrons transferred, four hydrogen ions are translocated across the cytoplasmic membrane), and thus conserves the redox energy in a proton gradient. This subunit may bind ubiquinone. The sequence is that of NADH-quinone oxidoreductase subunit H from Bradyrhizobium diazoefficiens (strain JCM 10833 / BCRC 13528 / IAM 13628 / NBRC 14792 / USDA 110).